A 138-amino-acid chain; its full sequence is Large ribosomal subunit protein bL17 (138 aa).

Belongs to the bacterial ribosomal protein bL17 family. In terms of assembly, part of the 50S ribosomal subunit. Contacts protein L32.

This Phenylobacterium zucineum (strain HLK1) protein is Large ribosomal subunit protein bL17.